The following is a 401-amino-acid chain: Histone acetyltransferase type B subunit 2 (401 aa).

WD repeat units follow at residues 116–147, 158–189, 206–237, 249–280, and 293–324; these read EHEE…FLYS, FHKD…ALWE, LHSD…KIND, KCPQ…YLYD, and GHED…MMWD. An interaction with the histone H4 N-terminus region spans residues 335 to 339; it reads DDAED. Residues 350-381 form a WD 6 repeat; that stretch reads GHRSSVNDFDLNPQIPWLVASAEEENILQVWK.

The protein belongs to the WD repeat RBAP46/RBAP48/MSI1 family. Component of the HAT-B complex composed of at least HAT1 and HAT2. In the cytoplasm, this complex binds to the histone H4 tail. In the nucleus, the HAT-B complex has an additional component, the histone H3/H4 chaperone HIF1.

It localises to the cytoplasm. The protein localises to the nucleus. Regulatory subunit of the histone acetylase B (HAT-B) complex. The complex acetylates 'Lys-12' of histone H4 which is required for telomeric silencing. HAT2 is required for high affinity binding of the acetyltransferase to histone H4, for the nuclear location of HAT1 and for the HAT1-HIF1 interaction. Alone, it is unable to bind to H4, requiring HAT1 for high affinity interaction with the histone tail. HAT2 also has a HAT1 independent function in life-span regulation. This chain is Histone acetyltransferase type B subunit 2 (HAT2), found in Saccharomyces cerevisiae (strain ATCC 204508 / S288c) (Baker's yeast).